Reading from the N-terminus, the 129-residue chain is uncharacterized protein (129 aa).

The disordered stretch occupies residues 1–129 (MWLWQDIQCC…HTSNGRTGDL (129 aa)). The segment covering 87–100 (KGADTRRLPRETRP) has biased composition (basic and acidic residues). Over residues 119 to 129 (PHTSNGRTGDL) the composition is skewed to polar residues.

This is an uncharacterized protein from Homo sapiens (Human).